Consider the following 122-residue polypeptide: Neutral phospholipase A2 agkistrodotoxin (122 aa).

Intrachain disulfides connect cysteine 26–cysteine 115, cysteine 28–cysteine 44, cysteine 43–cysteine 95, cysteine 49–cysteine 122, cysteine 50–cysteine 88, cysteine 57–cysteine 81, and cysteine 75–cysteine 86. Ca(2+)-binding residues include tyrosine 27, glycine 29, and glycine 31. Histidine 47 is an active-site residue. Residue aspartate 48 participates in Ca(2+) binding. Residue aspartate 89 is part of the active site.

The cofactor is Ca(2+). As to expression, expressed by the venom gland.

The protein localises to the secreted. The catalysed reaction is a 1,2-diacyl-sn-glycero-3-phosphocholine + H2O = a 1-acyl-sn-glycero-3-phosphocholine + a fatty acid + H(+). Its function is as follows. Snake venom phospholipase A2 (PLA2) that inhibits neuromuscular transmission by blocking acetylcholine release from the nerve termini. PLA2 catalyzes the calcium-dependent hydrolysis of the 2-acyl groups in 3-sn-phosphoglycerides. The sequence is that of Neutral phospholipase A2 agkistrodotoxin from Gloydius halys (Chinese water mocassin).